The primary structure comprises 63 residues: MKASELKDKTVEQLQEELLGLRREQFNLRMQAATGQLNQTHMMKQVRRDIARVKTILNEKAGA.

The protein belongs to the universal ribosomal protein uL29 family.

In Idiomarina loihiensis (strain ATCC BAA-735 / DSM 15497 / L2-TR), this protein is Large ribosomal subunit protein uL29.